Consider the following 200-residue polypeptide: Large ribosomal subunit protein uL4 (200 aa).

The tract at residues G38 to R68 is disordered. Residues G54–G65 show a composition bias toward basic residues.

It belongs to the universal ribosomal protein uL4 family. Part of the 50S ribosomal subunit.

Functionally, one of the primary rRNA binding proteins, this protein initially binds near the 5'-end of the 23S rRNA. It is important during the early stages of 50S assembly. It makes multiple contacts with different domains of the 23S rRNA in the assembled 50S subunit and ribosome. In terms of biological role, forms part of the polypeptide exit tunnel. The chain is Large ribosomal subunit protein uL4 from Pseudomonas savastanoi pv. phaseolicola (strain 1448A / Race 6) (Pseudomonas syringae pv. phaseolicola (strain 1448A / Race 6)).